A 60-amino-acid chain; its full sequence is Large ribosomal subunit protein bL32 (60 aa).

A compositionally biased stretch (basic residues) spans 1–16 (MAVPKKKTSKSRKNMR). Residues 1-20 (MAVPKKKTSKSRKNMRRAHD) are disordered.

This sequence belongs to the bacterial ribosomal protein bL32 family.

The polypeptide is Large ribosomal subunit protein bL32 (Geobacter metallireducens (strain ATCC 53774 / DSM 7210 / GS-15)).